A 265-amino-acid chain; its full sequence is Hydroxyethylthiazole kinase (265 aa).

M50 serves as a coordination point for substrate. The ATP site is built by R125 and T171. G198 is a binding site for substrate.

Belongs to the Thz kinase family. Requires Mg(2+) as cofactor.

The enzyme catalyses 5-(2-hydroxyethyl)-4-methylthiazole + ATP = 4-methyl-5-(2-phosphooxyethyl)-thiazole + ADP + H(+). Its pathway is cofactor biosynthesis; thiamine diphosphate biosynthesis; 4-methyl-5-(2-phosphoethyl)-thiazole from 5-(2-hydroxyethyl)-4-methylthiazole: step 1/1. Its function is as follows. Catalyzes the phosphorylation of the hydroxyl group of 4-methyl-5-beta-hydroxyethylthiazole (THZ). The chain is Hydroxyethylthiazole kinase from Salmonella schwarzengrund (strain CVM19633).